The following is a 275-amino-acid chain: Large ribosomal subunit protein uL2 (275 aa).

Positions 28–38 (EPYAPLLDKKS) are enriched in basic and acidic residues. 2 disordered regions span residues 28–55 (EPYAPLLDKKSKSGGRNNTGRITTRHVG) and 224–258 (AMNPVDHPHGGGEGRTSGGRHPVSPWGIPTKGYKT).

This sequence belongs to the universal ribosomal protein uL2 family. As to quaternary structure, part of the 50S ribosomal subunit. Forms a bridge to the 30S subunit in the 70S ribosome.

In terms of biological role, one of the primary rRNA binding proteins. Required for association of the 30S and 50S subunits to form the 70S ribosome, for tRNA binding and peptide bond formation. It has been suggested to have peptidyltransferase activity; this is somewhat controversial. Makes several contacts with the 16S rRNA in the 70S ribosome. The sequence is that of Large ribosomal subunit protein uL2 from Cellvibrio japonicus (strain Ueda107) (Pseudomonas fluorescens subsp. cellulosa).